We begin with the raw amino-acid sequence, 658 residues long: Phosphomethylpyrimidine synthase (658 aa).

The interval Met-1 to Glu-22 is disordered. Substrate contacts are provided by residues Asn-248, Met-277, Tyr-306, His-342, Ser-362 to Gly-364, Asp-403 to Arg-406, and Glu-442. A Zn(2+)-binding site is contributed by His-446. Tyr-469 provides a ligand contact to substrate. Position 510 (His-510) interacts with Zn(2+). [4Fe-4S] cluster is bound by residues Cys-590, Cys-593, and Cys-598.

Belongs to the ThiC family. As to quaternary structure, homodimer. Requires [4Fe-4S] cluster as cofactor.

The enzyme catalyses 5-amino-1-(5-phospho-beta-D-ribosyl)imidazole + S-adenosyl-L-methionine = 4-amino-2-methyl-5-(phosphooxymethyl)pyrimidine + CO + 5'-deoxyadenosine + formate + L-methionine + 3 H(+). It functions in the pathway cofactor biosynthesis; thiamine diphosphate biosynthesis. In terms of biological role, catalyzes the synthesis of the hydroxymethylpyrimidine phosphate (HMP-P) moiety of thiamine from aminoimidazole ribotide (AIR) in a radical S-adenosyl-L-methionine (SAM)-dependent reaction. In Colwellia psychrerythraea (strain 34H / ATCC BAA-681) (Vibrio psychroerythus), this protein is Phosphomethylpyrimidine synthase.